The following is a 529-amino-acid chain: Mitochondrial inner membrane magnesium transporter MIT1 (529 aa).

Coiled coils occupy residues 336–388 and 416–450; these read KIQL…LKNE and LLET…LNLD. The helical transmembrane segment at 456–476 threads the bilayer; the sequence is FILLNAKISFSTLFCSICAVI. Over 477–492 the chain is Mitochondrial intermembrane; sequence TSLFGMNLKNFIEHND. A helical membrane pass occupies residues 493–513; sequence YAFFIVSIFITSWSIVGIYFT. Topologically, residues 514-529 are mitochondrial matrix; it reads KNINTLLRFFDKYNVK.

Belongs to the CorA metal ion transporter (MIT) (TC 1.A.35) family.

The protein resides in the mitochondrion inner membrane. Functionally, mitochondrial inner membrane magnesium transporter required for mitochondrial magnesium homeostasis. Involved in the development of the sporozoite in the mosquito vector midgut. In Plasmodium falciparum (isolate 3D7), this protein is Mitochondrial inner membrane magnesium transporter MIT1.